Consider the following 453-residue polypeptide: Cyclic GMP-AMP phosphodiesterase SMPDL3A (453 aa).

The signal sequence occupies residues 1-22 (MALVRALVCCLLTAWHCRSGLG). The Zn(2+) site is built by aspartate 45 and histidine 47. Cysteines 62 and 81 form a disulfide. Residue asparagine 69 is glycosylated (N-linked (GlcNAc...) asparagine). Aspartate 110 is a binding site for Zn(2+). Histidine 114 lines the ATP pocket. Asparagine 131 is a glycosylation site (N-linked (GlcNAc...) asparagine). Asparagine 151 is a binding site for Zn(2+). The ATP site is built by asparagine 151 and histidine 152. 2 N-linked (GlcNAc...) asparagine glycosylation sites follow: asparagine 222 and asparagine 238. Histidine 252 serves as a coordination point for Zn(2+). Asparagine 263 is a glycosylation site (N-linked (GlcNAc...) asparagine). Histidine 293 and histidine 295 together coordinate Zn(2+). N-linked (GlcNAc...) asparagine glycosylation is present at asparagine 356. 2 disulfides stabilise this stretch: cysteine 420–cysteine 424 and cysteine 430–cysteine 443. Asparagine 437 carries an N-linked (GlcNAc...) asparagine glycan.

Belongs to the acid sphingomyelinase family. In terms of assembly, monomer. Homodimer; homodimerizes following 2',3'-cGAMP-binding. It depends on Zn(2+) as a cofactor. Post-translationally, N-glycosylation is required for protein maturation, secretion and phosphodiesterase activity. Detected in blood serum. Detected in macrophages (at protein level).

It is found in the secreted. It carries out the reaction 2',3'-cGAMP + H2O = 5'-pGpA(2'-5') + H(+). The catalysed reaction is 5'-pGpA(2'-5') + H2O = 5'-GpA(2'-5') + phosphate. It catalyses the reaction a ribonucleoside 5'-triphosphate + H2O = a ribonucleoside 5'-diphosphate + phosphate + H(+). The enzyme catalyses ATP + H2O = ADP + phosphate + H(+). Requires micromolar levels of Zn(2+) for activity. Inhibited by millimolar levels of Zn(2+). Its function is as follows. Cyclic-nucleotide phosphodiesterase that acts as a negative regulator of innate immunity by mediating degradation of 2',3'-cGAMP, thereby inhibiting the cGAS-STING signaling. Specifically linearizes 2',3'-cGAMP into 2'5'-bond pGpA and further hydrolyzes pGpA to produce GpA. Also has in vitro nucleotide phosphodiesterase activity with nucleoside triphosphates, such as ATP. Has in vitro activity with p-nitrophenyl-TMP. Has lower activity with nucleoside diphosphates, and no activity with nucleoside monophosphates. Has in vitro activity with CDP-choline, giving rise to CMP and phosphocholine. Has in vitro activity with CDP-ethanolamine. Does not have sphingomyelin phosphodiesterase activity. This is Cyclic GMP-AMP phosphodiesterase SMPDL3A from Homo sapiens (Human).